The chain runs to 355 residues: Galactoside 2-alpha-L-fucosyltransferase (355 aa).

Over 1-15 the chain is Cytoplasmic; it reads MRNVKGLFSYMTKTK. A helical; Signal-anchor for type II membrane protein transmembrane segment spans residues 16 to 36; the sequence is SFYISIIVIIFIIFIVNRMGP. At 37-355 the chain is on the lumenal side; the sequence is RNYNYKQIGT…MSRNGSIISK (319 aa). N-linked (GlcNAc...) asparagine glycans are attached at residues N92, N311, and N349.

This sequence belongs to the glycosyltransferase 11 family. Expression is restricted to the 20 intestinal cells in larvae and adult.

The protein resides in the golgi apparatus. The protein localises to the golgi stack membrane. It participates in protein modification; protein glycosylation. Selectively catalyzes the addition of fucose in alpha 1-2 linkage to Gal-beta-(1-&gt;4)-Xyl-beta-R, Gal-beta-(1-&gt;6)-GlcNAc-R, Gal-beta-(1-&gt;3)-Gal-beta-(1-&gt;4)-Glc and Gal-beta-(1-&gt;3)-Gal-beta-(1-&gt;4)-Xyl-R acceptors but not Gal-beta-(1-&gt;3)-GlcNAc-beta-(1-&gt;3)-Gal-beta-(1-&gt;4)-Glc. Unlike in mammals, unable to fucosylate Gal-beta-(1-&gt;4)-Glc-beta-R. The polypeptide is Galactoside 2-alpha-L-fucosyltransferase (Caenorhabditis elegans).